The primary structure comprises 915 residues: Clathrin coat assembly protein AP180 (915 aa).

Residues 14 to 145 form the ENTH domain; the sequence is QYSVTGSAVA…FSYRQMAFDF (132 aa). Disordered stretches follow at residues 285-326, 391-425, and 497-522; these read LEGK…DTSP, SVPS…ATTA, and PETS…PSPA. 3 positions are modified to phosphoserine: serine 296, serine 300, and serine 306. Over residues 302–324 the composition is skewed to polar residues; that stretch reads LSKSSPATTVTSPNSTPAKTIDT. Threonine 310 is a glycosylation site (O-linked (GlcNAc) threonine). Residue serine 313 is modified to Phosphoserine. Position 317 is a phosphothreonine (threonine 317). Low complexity-rich tracts occupy residues 410 to 425 and 500 to 511; these read TTTT…ATTA and SAPVVTPTASTA. The span at 512-522 shows a compositional bias: pro residues; the sequence is PPVPATAPSPA. Phosphoserine is present on residues serine 594, serine 600, proline 627, serine 640, and serine 646. Residues 720–735 show a composition bias toward low complexity; it reads TTPSTSSSSSFDPSGD. The tract at residues 720-765 is disordered; it reads TTPSTSSSSSFDPSGDLLMPTMAPSGQPAPVSMVPPSPAMSASKGL. Residue serine 775 is modified to Phosphoserine. The segment at 817 to 855 is disordered; that stretch reads SAGVPPQGTVPPTSSVPPGAGAPSVGQPGAGYGMPPAGT. Arginine 873 carries the asymmetric dimethylarginine; alternate modification. Arginine 873 bears the Omega-N-methylarginine; alternate mark. The segment at 875 to 915 is disordered; that stretch reads PFGAAAVPGTQLSPSPTPATQSPKKPPAKDPLADLNIKDFL. Positions 884-896 are enriched in polar residues; it reads TQLSPSPTPATQS. Residues 901–915 are compositionally biased toward basic and acidic residues; the sequence is PAKDPLADLNIKDFL.

This sequence belongs to the PICALM/SNAP91 family. Binds AP2A2. Interacts with AP2B1; clathrin competes with SNAP91. Thr-310 can be modified by the addition of N-acetylglucosamine which can be further phosphorylated. The form with phosphorylated O-linked N-acetylglucosamine is predominant in brain synaptosomes. There is no evidence for direct Thr-310 phosphorylation.

It localises to the cell membrane. The protein localises to the membrane. The protein resides in the coated pit. In terms of biological role, adaptins are components of the adapter complexes which link clathrin to receptors in coated vesicles. Clathrin-associated protein complexes are believed to interact with the cytoplasmic tails of membrane proteins, leading to their selection and concentration. Binding of AP180 to clathrin triskelia induces their assembly into 60-70 nm coats. The sequence is that of Clathrin coat assembly protein AP180 (Snap91) from Rattus norvegicus (Rat).